The primary structure comprises 348 residues: Dihydroorotate dehydrogenase (quinone) (348 aa).

FMN contacts are provided by residues 60 to 64 and threonine 84; that span reads AGFDK. Lysine 64 provides a ligand contact to substrate. 109-113 contributes to the substrate binding site; that stretch reads NRLGF. Residues asparagine 138 and asparagine 169 each coordinate FMN. A substrate-binding site is contributed by asparagine 169. Residue serine 172 is the Nucleophile of the active site. Asparagine 174 serves as a coordination point for substrate. The FMN site is built by lysine 207 and serine 235. 236 to 237 serves as a coordination point for substrate; sequence NT. Residues glycine 258, glycine 287, and 308-309 each bind FMN; that span reads YS.

This sequence belongs to the dihydroorotate dehydrogenase family. Type 2 subfamily. As to quaternary structure, monomer. FMN serves as cofactor.

It localises to the cell membrane. It catalyses the reaction (S)-dihydroorotate + a quinone = orotate + a quinol. It participates in pyrimidine metabolism; UMP biosynthesis via de novo pathway; orotate from (S)-dihydroorotate (quinone route): step 1/1. In terms of biological role, catalyzes the conversion of dihydroorotate to orotate with quinone as electron acceptor. The chain is Dihydroorotate dehydrogenase (quinone) from Parvibaculum lavamentivorans (strain DS-1 / DSM 13023 / NCIMB 13966).